The chain runs to 767 residues: MQNWETTATTNYEQHNAWYNSMFAANIKQEPGHHLDGNSVASSPRQSPIPSTNHLEQFLKQQQQQHQHQQQPMDTLCAMTPSPSQNDQNSLQHYDANLQQQLLQQQQYQQHFQAAQQQHHHHHHLMGGFNPLTPPGLPNPMQHFYGGNLRPSPQPTPISASTVASVAVATGSSEKLQALTPPMDVTPPKSPAKSSQSNIEPEKEHDQMSNSSEDMKYMVESEDDDTNIRMPIYNSHGKMKNYKCKTCGVVAITKVDFWAHTRTHMKPDKILQCPKCPFVTEFKHHLEYHIRKHKNQKPFQCDKCSYTCVNKSMLNSHRKSHSSVYQYRCADCDYATKYCHSFKLHLRKYGHKPGMVLDEDGTPNPSLVIDVYGTRRGPKSKNGGPIASGGSGSGSGSGSRKSNVAAVAPQQQQTQPTQPPTSQLSAALQGFPLVQSNSAPPAASPLLPLPVSPAKSVASVEQTPSLPSPANLLPPLASLLQQNHNMAFFPYWNLNLQMLAAQQQAAVLAQLSPRMREQLQQQNQQQSDNEEEEQDDEYERKSVDSAMDLSQGTPVKEEEQQQLHQQQPQQPLVMNLKVEEEATPLVSSSNASRRKGRVLKLDTLLQLRSGVMTSPEQLKVPSTPMPTASSPIAGRKPMPEDHCSGTSSADESMETAHVRQANTSASSTASSSGNSSNASSNSNGNSSSNSSSSGTNSAAAAPPSGTPAAAGAIYECKYCDIFFKDAVLYTIHMGYHSCDDVFKCNMCGEKCDGPVGLFVHMARNAHS.

3 disordered regions span residues 30 to 51 (EPGH…PIPS), 105 to 127 (QQQY…HLMG), and 174 to 212 (EKLQ…SNSS). Residues 39 to 51 (SVASSPRQSPIPS) show a composition bias toward polar residues. Over residues 105-117 (QQQYQQHFQAAQQ) the composition is skewed to low complexity. The span at 200-212 (EPEKEHDQMSNSS) shows a compositional bias: basic and acidic residues. C2H2-type zinc fingers lie at residues 242 to 264 (YKCK…TRTH), 271 to 293 (LQCP…IRKH), 299 to 321 (FQCD…RKSH), and 327 to 351 (YRCA…KYGH). 3 disordered regions span residues 357 to 424 (LDED…TSQL), 518 to 570 (QLQQ…QPQQ), and 610 to 704 (GVMT…APPS). Residues 386–397 (IASGGSGSGSGS) show a composition bias toward gly residues. Over residues 518–527 (QLQQQNQQQS) the composition is skewed to low complexity. Residues 528–537 (DNEEEEQDDE) are compositionally biased toward acidic residues. A compositionally biased stretch (low complexity) spans 661–704 (ANTSASSTASSSGNSSNASSNSNGNSSSNSSSSGTNSAAAAPPS). C2H2-type zinc fingers lie at residues 714 to 736 (YECK…MGYH) and 742 to 766 (FKCN…RNAH).

This sequence belongs to the hunchback C2H2-type zinc-finger protein family.

The protein localises to the nucleus. Its function is as follows. Gap class segmentation protein that controls development of head structures. This Drosophila orena (Fruit fly) protein is Protein hunchback (hb).